A 648-amino-acid polypeptide reads, in one-letter code: MHWTPEHAQPLNQWPEQHLDVSSTTPSPAHKLELPPGGRQRCHYAWAHDDISALTASNLLKRYAEKYSGVLDSPYERPGLGSYGDAAFLNGAKADPEPWPGPEPPYPLASLHEGLPGAKPAGAGGSAGLGGSPVVAGNLTEPLYTGNACGGPSAATEYAAGYGGGYLASGYCAQTSAALAPPPPAALLQPAPPPGYGPSAPLYNYPAAGYAAQPGYGALPPPAAPPAPYLPSGLAAPTPLPAPAPAPPRPAPYGFPGAAEGVSLKRKAVDEGAEARYRKYAYEPAKAPAADGAAYPAADDAECRGNGFRAKPPGTTEDGTGKYGGGGSLKVLGSPAYAPQLEPFDKFAERVPAAHGGFAEPSGEPAKGVDPGTLELVSSKMVDCGPPVQWADVAGQGALKAALEEELLWPLLRPPACPGSARPPRTVLFFGPRGCGKALLGRCLATRLGATLLRLRGAGLATSGAVEGARLLQAAFAAARCRPPAVLLISELDALLPARDDGASLRAPLLTCLDGGCGARADGVLVVGTTSRPAALDEATRRRFALRFYVALPDGAARGQILQRALAQQGCVLSERELAALVQGTQGFSGGELGQLCQQAAAEAGLSGLQRPLSYKEVEAALAKVGPRAPPKELDSLVEWDKMYGSGH.

The disordered stretch occupies residues 1–36 (MHWTPEHAQPLNQWPEQHLDVSSTTPSPAHKLELPP). The span at 10-27 (PLNQWPEQHLDVSSTTPS) shows a compositional bias: polar residues. Residues Ala-394 and 434 to 439 (GCGKAL) each bind ATP.

It belongs to the AAA ATPase family. Mg(2+) is required as a cofactor.

It localises to the cytoplasm. The protein resides in the cell cortex. It carries out the reaction ATP + H2O = ADP + phosphate + H(+). Functionally, microtubule-severing enzyme that negatively regulates cell migration and wound healing. In migrating cells, targets dynamic microtubules (MTs) at the leading edge and severs them, thereby suppressing motility. Microtubule severing releases ARHGEF2 which activates RHOA, which in turn regulates focal ahesion turnover via focal adhesion kinase, as opposed to F-actin polymerization, to suppress cell motility. Negative regulator of axon regeneration that suppresses axonal growth by selectively severing dynamic MTs in the distal axon shaft and growth cone. Contributes to proper cell branching during endothelial and neuronal development. This Rattus norvegicus (Rat) protein is Fidgetin-like protein 2 (Fignl2).